The chain runs to 299 residues: Nicotinate-nucleotide pyrophosphorylase [carboxylating] (299 aa).

An important for hexamer formation region spans residues F8–P12. Quinolinate is bound by residues R102, R138–K139, H160–R161, K171, E201, D222, S248–G250, and G270.

Belongs to the NadC/ModD family. As to quaternary structure, hexamer formed by 3 homodimers.

The catalysed reaction is nicotinate beta-D-ribonucleotide + CO2 + diphosphate = quinolinate + 5-phospho-alpha-D-ribose 1-diphosphate + 2 H(+). The protein operates within cofactor biosynthesis; NAD(+) biosynthesis; nicotinate D-ribonucleotide from quinolinate: step 1/1. In terms of biological role, involved in the catabolism of quinolinic acid (QA). The polypeptide is Nicotinate-nucleotide pyrophosphorylase [carboxylating] (Qprt) (Rattus norvegicus (Rat)).